A 2291-amino-acid chain; its full sequence is Protein Ycf2 B (2291 aa).

ATP is bound at residue 1642 to 1649 (GSIGTGRS).

It belongs to the Ycf2 family.

The protein localises to the plastid. It localises to the chloroplast stroma. Probable ATPase of unknown function. Its presence in a non-photosynthetic plant (Epifagus virginiana) and experiments in tobacco indicate that it has an essential function which is probably not related to photosynthesis. The chain is Protein Ycf2 B (ycf2-B) from Atropa belladonna (Belladonna).